Consider the following 231-residue polypeptide: tRNA (guanine-N(1)-)-methyltransferase (231 aa).

S-adenosyl-L-methionine contacts are provided by residues Gly109 and 133 to 138 (IGDYVL).

This sequence belongs to the RNA methyltransferase TrmD family. As to quaternary structure, homodimer.

Its subcellular location is the cytoplasm. It carries out the reaction guanosine(37) in tRNA + S-adenosyl-L-methionine = N(1)-methylguanosine(37) in tRNA + S-adenosyl-L-homocysteine + H(+). Its function is as follows. Specifically methylates guanosine-37 in various tRNAs. This Nocardia farcinica (strain IFM 10152) protein is tRNA (guanine-N(1)-)-methyltransferase.